The following is a 1203-amino-acid chain: Regulator of telomere elongation helicase 1 (1203 aa).

The region spanning 7–296 (NGVTVDFPFQ…ARVTQQGELQ (290 aa)) is the Helicase ATP-binding domain. 42 to 49 (SPTGTGKT) provides a ligand contact to ATP. Positions 145, 163, 172, and 207 each coordinate [4Fe-4S] cluster. Residues 151–167 (KKQESNHMQISLCRKKV) carry the Nuclear localization signal motif. Residues 250-253 (DEAH) carry the DEAH box motif. The short motif at 871-877 (QKGGRKK) is the Nuclear localization signal element. 2 disordered regions span residues 998–1020 (QLDPGQHLNQGQPHLSAHPTSKG) and 1120–1203 (TTGK…RSKQ). Residues 1004–1020 (HLNQGQPHLSAHPTSKG) show a composition bias toward polar residues. The span at 1123-1134 (KDLELEGPRDES) shows a compositional bias: basic and acidic residues. Positions 1160-1167 (QSKISSFF) match the PIP-box motif. Residues 1169–1181 (QRPDESVRSDDTT) are compositionally biased toward basic and acidic residues.

It belongs to the helicase family. RAD3/XPD subfamily. As to quaternary structure, interacts with TERF1. Interacts (via PIP-box) with PCNA; the interaction is direct and essential for suppressing telomere fragility. Interacts with MMS19; the interaction mediates the association of RTEL1 with the cytosolic iron-sulfur protein assembly (CIA) complex. Widely expressed. Expressed in spleen, thymus, Peyer patches, kidney, and intestine. Not expressed in brain, heart, lung, skeletal muscles, skin and white fat. In the adult gonad, it is highly expressed in the testis, mainly in the spermatogonia and meiotic spermatocytes.

The protein localises to the nucleus. It carries out the reaction ATP + H2O = ADP + phosphate + H(+). A probable ATP-dependent DNA helicase implicated in telomere-length regulation, DNA repair and the maintenance of genomic stability. Acts as an anti-recombinase to counteract toxic recombination and limit crossover during meiosis. Regulates meiotic recombination and crossover homeostasis by physically dissociating strand invasion events and thereby promotes noncrossover repair by meiotic synthesis dependent strand annealing (SDSA) as well as disassembly of D loop recombination intermediates. Also disassembles T loops and prevents telomere fragility by counteracting telomeric G4-DNA structures, which together ensure the dynamics and stability of the telomere. This chain is Regulator of telomere elongation helicase 1, found in Mus musculus (Mouse).